The chain runs to 412 residues: MRLTVFLSLFLGVMVFGAFDQEAFLFVQHLTSENFESALNMCSNQVKAQLSVQSLSNIWNSLKAQLSDFREIAGYEKIIQAEYEIYNFTLKFDRGEISALVTMDREGKVAGLFFKQATKTEYELPDYVDPESFEEKDITVNGLPGKITIPKGSGPFPAVVLVHGSGPNDMDETIGPNKIFKDIAYGLSSKGIIVLRYHKRTFVEKVDPTTLTVEKEVIEDALEAVKILKERKDVSRVYVLGHSLGAMLTPEIAERSKADGVVMIAPPARPLEEVMEDQLKYLQSLGLASNVEETLNILEKLKRKEIPPDEFVLGAPAKYFYDLRERDPASIAKRLTIPMLLIFGGRDYQVTEKDQEIWLKELSGRENVKILVFDDLNHLMISGEGKSTPVEYMKKGHVDKRVIDEIARWMVK.

The first 20 residues, 1–20 (MRLTVFLSLFLGVMVFGAFD), serve as a signal peptide directing secretion. Catalysis depends on S243, which acts as the Nucleophile. Active-site charge relay system residues include D347 and H378.

It belongs to the AB hydrolase superfamily. Esterase 10 family. As to quaternary structure, exists mainly as a monomer and, to some extent as a dimer.

It catalyses the reaction a carboxylic ester + H2O = an alcohol + a carboxylate + H(+). Is strongly inhibited by phenylmethylsulfonyl fluoride, a serine protease inhibitor, and by mercury chloride. Diethyl pyrocarbonate, a histidine modifier, also inhibits the reaction, albeit less pronounced than phenylmethylsulfonyl fluoride. EDTA and dithiothreitol have no effect on enzyme activity. In terms of biological role, exhibits significant esterase activity with a preference for short acyl chain esters (C4-C8) in vitro. Its physiological function is not known. Displays neither proteolytic activity using casein as substrate, nor peptidase activity when assayed with L-leucine p-nitroanilide and L-proline p-nitroanilide. The polypeptide is Esterase EstD (Thermotoga maritima (strain ATCC 43589 / DSM 3109 / JCM 10099 / NBRC 100826 / MSB8)).